The following is an 89-amino-acid chain: Small ribosomal subunit protein uS14B (89 aa).

The interval 38–61 (KLPKDAHPSRLKLRDQTDGRPRGY) is disordered. The segment covering 39-58 (LPKDAHPSRLKLRDQTDGRP) has biased composition (basic and acidic residues).

The protein belongs to the universal ribosomal protein uS14 family. In terms of assembly, part of the 30S ribosomal subunit. Contacts proteins S3 and S10.

In terms of biological role, binds 16S rRNA, required for the assembly of 30S particles and may also be responsible for determining the conformation of the 16S rRNA at the A site. This is Small ribosomal subunit protein uS14B from Enterococcus faecalis (strain ATCC 700802 / V583).